We begin with the raw amino-acid sequence, 421 residues long: Phosphatidylinositol 5-phosphate 4-kinase type-2 gamma (421 aa).

Ala-2 is subject to N-acetylalanine. Ser-26 carries the post-translational modification Phosphoserine. One can recognise a PIPK domain in the interval 43 to 420 (AADPLVGVFL…RFLDFITNIF (378 aa)). The required for interaction with PIP5K1A stretch occupies residues 69–75 (VMLLPDD). Ser-349 carries the post-translational modification Phosphoserine.

Interacts with PIP5K1A; the interaction inhibits PIP5K1A kinase activity. In terms of processing, phosphorylated, phosphorylation is induced by EGF.

It localises to the endoplasmic reticulum. The protein localises to the cytoplasm. The catalysed reaction is a 1,2-diacyl-sn-glycero-3-phospho-(1D-myo-inositol-5-phosphate) + ATP = a 1,2-diacyl-sn-glycero-3-phospho-(1D-myo-inositol-4,5-bisphosphate) + ADP + H(+). It catalyses the reaction 1,2-dihexadecanoyl-sn-glycero-3-phospho-(1D-myo-inositol-5-phosphate) + ATP = 1,2-dihexadecanoyl-sn-glycero-3-phospho-(1D-myo-inositol-4,5-bisphosphate) + ADP + H(+). The enzyme catalyses 1,2-dihexadecanoyl-sn-glycero-3-phospho-(1D-myo-inositol-5-phosphate) + GTP = 1,2-dihexadecanoyl-sn-glycero-3-phospho-(1D-myo-inositol-4,5-bisphosphate) + GDP + H(+). Functionally, phosphatidylinositol 5-phosphate 4-kinase with low enzymatic activity. May be a GTP sensor, has higher GTP-dependent kinase activity than ATP-dependent kinase activity. PIP4Ks negatively regulate insulin signaling through a catalytic-independent mechanism. They interact with PIP5Ks and suppress PIP5K-mediated PtdIns(4,5)P2 synthesis and insulin-dependent conversion to PtdIns(3,4,5)P3. This chain is Phosphatidylinositol 5-phosphate 4-kinase type-2 gamma, found in Homo sapiens (Human).